The chain runs to 213 residues: Protein DMP3 (213 aa).

The tract at residues 1–27 is disordered; the sequence is MSSPSSLTQRNPTSSQEQSESVPQLRR. 4 helical membrane passes run 45–65, 74–94, 136–156, and 176–196; these read LANLLPTGTLLAFTLLIPVFT, TQVLTIVLLTLLSISCFLSSF, IRIIDWIHAVLSVLVFGAVAL, and VLDIVPMGVGVICGMLFLVFP.

The protein belongs to the plant DMP1 protein family. Expressed in leaves, siliques and roots (e.g. root hairs).

Its subcellular location is the endoplasmic reticulum membrane. Functionally, involved in membrane remodeling. The chain is Protein DMP3 from Arabidopsis thaliana (Mouse-ear cress).